The primary structure comprises 825 residues: Breast cancer anti-estrogen resistance protein 3 (825 aa).

Ala-2 is subject to N-acetylalanine. Phosphoserine is present on residues Ser-32, Ser-78, and Ser-83. Residues 40-106 (DAYQDVSIHG…DRHGETFTFR (67 aa)) form a disordered region. Positions 79 to 94 (PRQNSPVTQDGIQESP) are enriched in polar residues. A compositionally biased stretch (basic and acidic residues) spans 95–106 (WQDRHGETFTFR). One can recognise an SH2 domain in the interval 154-253 (WYHGRIPRQV…QSGAIIFQPI (100 aa)). A phosphoserine mark is found at Ser-182 and Ser-290. Lys-334 bears the N6-methyllysine mark. 3 positions are modified to phosphoserine: Ser-358, Ser-363, and Ser-375. Position 442 is an omega-N-methylarginine (Arg-442). Ser-471 is modified (phosphoserine). A Ras-GEF domain is found at 548–818 (DPKVIAQHVL…TALSRKLEPP (271 aa)). The mediates the interaction with BCAR1/p130CAS stretch occupies residues 744-748 (LATAR).

Part of a complex comprised of PTPRA, BCAR1, BCAR3 (via SH2 domain) and SRC; the formation of the complex is dependent on integrin mediated-tyrosine phosphorylation of PTPRA. Within the complex, interacts (via SH2 domain) with PTPRA (when phosphorylated on 'Tyr-798'). Interacts (via Ras-GEF domain) with BCAR1. Interacts (via Ras-GEF domain) with NEDD9. Interacts with PTK2/FAK1. Interacts with PTPN1. Interacts (via SH2 domain) with EGFR (when tyrosine-phosphorylated). Phosphorylated on tyrosine residues. Ubiquitously expressed. Found in several cancer cell lines, but not in nonmalignant breast tissue.

The protein resides in the cytoplasm. The protein localises to the cell junction. Its subcellular location is the focal adhesion. Acts as an adapter protein downstream of several growth factor receptors to promote cell proliferation, migration, and redistribution of actin fibers. Specifically involved in INS/insulin signaling pathway by mediating MAPK1/ERK2-MAPK3/ERK1 activation and DNA synthesis. Promotes insulin-mediated membrane ruffling. In response to vasoconstrictor peptide EDN1, involved in the activation of RAP1 downstream of PTK2B via interaction with phosphorylated BCAR1. Inhibits cell migration and invasion via regulation of TGFB-mediated matrix digestion, actin filament rearrangement, and inhibition of invadopodia activity. May inhibit TGFB-SMAD signaling, via facilitating BCAR1 and SMAD2 and/or SMAD3 interaction. Regulates EGF-induced DNA synthesis. Required for the maintenance of ocular lens morphology and structural integrity, potentially via regulation of focal adhesion complex signaling. Acts upstream of PTPRA to regulate the localization of BCAR1 and PTPRA to focal adhesions, via regulation of SRC-mediated phosphorylation of PTPRA. Positively regulates integrin-induced tyrosine phosphorylation of BCAR1. Acts as a guanine nucleotide exchange factor (GEF) for small GTPases RALA, RAP1A and RRAS. However, in a contrasting study, lacks GEF activity towards RAP1. The polypeptide is Breast cancer anti-estrogen resistance protein 3 (BCAR3) (Homo sapiens (Human)).